We begin with the raw amino-acid sequence, 429 residues long: MDRIRIVGGAQLNGTIPISGAKNAALPLMIAGLLTDETLILDNVPRLADVAQLQRILGNHGVDIMAAGKRPGDHEYQGQTLHISAKNIIDTTAPYELVSKMRASFWVIAPLLARMHEAKVSLPGGCAIGTRPVDLLIMALEKLGATLTIDGGYVIASAPGGLKGAAIEFPKVTVSGTHVALMAATLARGTTVIGNAACEPEIVDVADCLNKMGGKISGAGTPRITIEGVAKLHGARHTVLPDRIETGTYAMAVAMTGGDVQLSGARPELLQSALDVLTQAGATITVNNDGIRVTRNGAGLNPVTVTTAPFPGFPTDLQAQLMALMACAKGASHITETIFENRFMHVQELARFGARIQLDGETATIDGVAKLRGAPVMATDLRASVSLVIAGLAAEGETMVNRIYHLDRGFERLEEKLSACGATIERISG.

Position 22-23 (22-23) interacts with phosphoenolpyruvate; it reads KN. R102 lines the UDP-N-acetyl-alpha-D-glucosamine pocket. C126 acts as the Proton donor in catalysis. C126 carries the post-translational modification 2-(S-cysteinyl)pyruvic acid O-phosphothioketal. Residues 131–135, D316, and I338 each bind UDP-N-acetyl-alpha-D-glucosamine; that span reads RPVDL.

The protein belongs to the EPSP synthase family. MurA subfamily.

It localises to the cytoplasm. It catalyses the reaction phosphoenolpyruvate + UDP-N-acetyl-alpha-D-glucosamine = UDP-N-acetyl-3-O-(1-carboxyvinyl)-alpha-D-glucosamine + phosphate. It participates in cell wall biogenesis; peptidoglycan biosynthesis. Its function is as follows. Cell wall formation. Adds enolpyruvyl to UDP-N-acetylglucosamine. The protein is UDP-N-acetylglucosamine 1-carboxyvinyltransferase of Rhodopseudomonas palustris (strain BisB18).